Reading from the N-terminus, the 192-residue chain is Adenylate kinase (192 aa).

12–17 (GSGKTT) serves as a coordination point for ATP. The tract at residues 34–63 (STGDLLRAEVASGSELGQTIKSYIDNGNLV) is NMP. Residues T35, R40, 61–63 (NLV), 88–91 (GFPR), and Q95 each bind AMP. An LID region spans residues 130-136 (GRARGAD). R131 contributes to the ATP binding site. R133 and R145 together coordinate AMP. Residue R173 coordinates ATP.

It belongs to the adenylate kinase family. In terms of assembly, monomer.

The protein localises to the cytoplasm. The enzyme catalyses AMP + ATP = 2 ADP. It participates in purine metabolism; AMP biosynthesis via salvage pathway; AMP from ADP: step 1/1. Its function is as follows. Catalyzes the reversible transfer of the terminal phosphate group between ATP and AMP. Plays an important role in cellular energy homeostasis and in adenine nucleotide metabolism. In Nautilia profundicola (strain ATCC BAA-1463 / DSM 18972 / AmH), this protein is Adenylate kinase.